Here is a 329-residue protein sequence, read N- to C-terminus: GTP 3',8-cyclase (329 aa).

Residues 8 to 234 (AFARKFYYLR…QLRQRSDGPA (227 aa)) form the Radical SAM core domain. Arg-17 is a GTP binding site. [4Fe-4S] cluster contacts are provided by Cys-24 and Cys-28. An S-adenosyl-L-methionine-binding site is contributed by Tyr-30. Cys-31 contributes to the [4Fe-4S] cluster binding site. Arg-68 contributes to the GTP binding site. Gly-72 provides a ligand contact to S-adenosyl-L-methionine. GTP is bound at residue Thr-99. Ser-123 contacts S-adenosyl-L-methionine. Lys-160 serves as a coordination point for GTP. Position 194 (Met-194) interacts with S-adenosyl-L-methionine. [4Fe-4S] cluster is bound by residues Cys-257 and Cys-260. 262–264 (RLR) contributes to the GTP binding site. Cys-274 lines the [4Fe-4S] cluster pocket.

This sequence belongs to the radical SAM superfamily. MoaA family. As to quaternary structure, monomer and homodimer. Requires [4Fe-4S] cluster as cofactor.

The enzyme catalyses GTP + AH2 + S-adenosyl-L-methionine = (8S)-3',8-cyclo-7,8-dihydroguanosine 5'-triphosphate + 5'-deoxyadenosine + L-methionine + A + H(+). It functions in the pathway cofactor biosynthesis; molybdopterin biosynthesis. In terms of biological role, catalyzes the cyclization of GTP to (8S)-3',8-cyclo-7,8-dihydroguanosine 5'-triphosphate. The polypeptide is GTP 3',8-cyclase (Escherichia coli (strain K12 / MC4100 / BW2952)).